A 323-amino-acid polypeptide reads, in one-letter code: Acetyl esterase (323 aa).

The short motif at 91–93 (HGG) is the Involved in the stabilization of the negatively charged intermediate by the formation of the oxyanion hole element. Catalysis depends on residues serine 165, aspartate 262, and histidine 292.

Belongs to the 'GDXG' lipolytic enzyme family. In terms of assembly, homodimer. Interacts with MalT and MelA.

It is found in the cytoplasm. In terms of biological role, displays esterase activity towards short chain fatty esters (acyl chain length of up to 8 carbons). Able to hydrolyze triacetylglycerol (triacetin) and tributyrylglycerol (tributyrin), but not trioleylglycerol (triolein) or cholesterol oleate. Negatively regulates MalT activity by antagonizing maltotriose binding. Inhibits MelA galactosidase activity. The chain is Acetyl esterase from Salmonella agona (strain SL483).